Reading from the N-terminus, the 193-residue chain is Early light-induced protein 2, chloroplastic (193 aa).

Residues 1-43 (MATASFNMQSVFAAPSGVLTTRNIRNTNQLFFKRIAPVGVRCM) constitute a chloroplast transit peptide. A disordered region spans residues 46–80 (GDPIKEDPSVPSTSTSATPPQMPQSPPPPVSKPKV). The segment covering 54–64 (SVPSTSTSATP) has biased composition (low complexity). The span at 65-76 (PQMPQSPPPPVS) shows a compositional bias: pro residues. 3 helical membrane passes run 102–122 (LAMVGFVAAIAMELSKGENVF), 129–149 (GVGWFLGTTALLTLASMVPLF), and 173–193 (FAMLGLVALAFTEYVTGGTLV).

It belongs to the ELIP/psbS family.

It is found in the plastid. It localises to the chloroplast thylakoid membrane. Functionally, probably involved in the integration of pigments into the mature light-harvesting pigment-protein complexes. Light-harvesting chlorophyll (LHC) a/b-binding protein required to ensure a high rate of chlorophyll accumulation during deetiolation in continuous high light. Involved in seed germination. May fulfill a photoprotective functions. Prevents excess accumulation of free chlorophyll by inhibiting the entire chlorophyll biosynthesis pathway (e.g. 5-aminolevulinate synthesis and Mg-protoporphyrin IX chelatase activity), and hence prevent photooxidative stress. The chain is Early light-induced protein 2, chloroplastic from Arabidopsis thaliana (Mouse-ear cress).